The sequence spans 388 residues: Serpin B11 (388 aa).

Residues 338–362 (EEGTEAAAATGESISVKRLPVTVQF) form an RCL region.

The protein belongs to the serpin family. Ov-serpin subfamily. In terms of tissue distribution, expressed in eye, lung, lymphocytes, thymus, stomach, uterus, heart, brain, liver, skeletal muscle, and in day 7, 15, and 17 embryos.

The protein resides in the cytoplasm. Inhibitor of serine proteases. Has moderate inhibitory activity for trypsin-like peptidases, but also some activity with cysteine peptidases, cathepsin L, K, and V, and the serine peptidase, tryptase gamma. This Mus musculus (Mouse) protein is Serpin B11 (Serpinb11).